A 62-amino-acid chain; its full sequence is Conotoxin TxIC (62 aa).

The N-terminal stretch at 1-22 (MHCLPIFVILLLLTASGPSVDA) is a signal peptide. Residues 23–47 (QLKTKDDVPLSSFRDHAKSTLRRLQ) constitute a propeptide that is removed on maturation. 2 disulfide bridges follow: Cys-52-Cys-58 and Cys-53-Cys-61. A 4-hydroxyproline modification is found at Pro-60. Cys-61 carries the cysteine amide modification.

It belongs to the conotoxin A superfamily. Expressed by the venom duct.

The protein resides in the secreted. The protein is Conotoxin TxIC of Conus textile (Cloth-of-gold cone).